A 487-amino-acid chain; its full sequence is NADH-quinone oxidoreductase subunit N (487 aa).

Helical transmembrane passes span 9–29 (PVLP…LGVF), 38–58 (VSVL…SLGG), 73–93 (FAGF…AMSL), 108–128 (VLVL…DFIA), 161–181 (FVLG…LYGF), 208–228 (IIAG…AVPF), 240–260 (PTPV…CLLV), 277–297 (VVTF…VVQT), 306–326 (SSIG…TLGI), 328–348 (GVLI…AVIL), 374–394 (AFVM…AGFW), 408–430 (LYTL…LRIV), and 452–472 (LVMA…APLV).

This sequence belongs to the complex I subunit 2 family. NDH-1 is composed of 14 different subunits. Subunits NuoA, H, J, K, L, M, N constitute the membrane sector of the complex.

It localises to the cell inner membrane. It catalyses the reaction a quinone + NADH + 5 H(+)(in) = a quinol + NAD(+) + 4 H(+)(out). Functionally, NDH-1 shuttles electrons from NADH, via FMN and iron-sulfur (Fe-S) centers, to quinones in the respiratory chain. The immediate electron acceptor for the enzyme in this species is believed to be ubiquinone. Couples the redox reaction to proton translocation (for every two electrons transferred, four hydrogen ions are translocated across the cytoplasmic membrane), and thus conserves the redox energy in a proton gradient. The protein is NADH-quinone oxidoreductase subunit N of Paramagnetospirillum magneticum (strain ATCC 700264 / AMB-1) (Magnetospirillum magneticum).